The primary structure comprises 658 residues: Glycogen debranching enzyme (658 aa).

Asp336 functions as the Nucleophile in the catalytic mechanism. The Proton donor role is filled by Glu371. The interval 460–484 is disordered; sequence ANGEENRDGSNNNHSNNHGKEGLGG.

Belongs to the glycosyl hydrolase 13 family.

The catalysed reaction is Hydrolysis of (1-&gt;6)-alpha-D-glucosidic linkages to branches with degrees of polymerization of three or four glucose residues in limit dextrin.. It participates in glycan degradation; glycogen degradation. In terms of biological role, removes maltotriose and maltotetraose chains that are attached by 1,6-alpha-linkage to the limit dextrin main chain, generating a debranched limit dextrin. The sequence is that of Glycogen debranching enzyme from Escherichia fergusonii (strain ATCC 35469 / DSM 13698 / CCUG 18766 / IAM 14443 / JCM 21226 / LMG 7866 / NBRC 102419 / NCTC 12128 / CDC 0568-73).